The following is a 103-amino-acid chain: Large ribosomal subunit protein bL21 (103 aa).

This sequence belongs to the bacterial ribosomal protein bL21 family. As to quaternary structure, part of the 50S ribosomal subunit. Contacts protein L20.

Its function is as follows. This protein binds to 23S rRNA in the presence of protein L20. This is Large ribosomal subunit protein bL21 from Colwellia psychrerythraea (strain 34H / ATCC BAA-681) (Vibrio psychroerythus).